The chain runs to 176 residues: Interleukin-7 (176 aa).

An N-terminal signal peptide occupies residues 1-25; sequence MFHVSFRYIFGIPPLILVLLPVASS. Intrachain disulfides connect cysteine 27-cysteine 165, cysteine 58-cysteine 153, and cysteine 71-cysteine 116. Residues asparagine 94, asparagine 115, and asparagine 140 are each glycosylated (N-linked (GlcNAc...) asparagine).

Belongs to the IL-7/IL-9 family.

The protein resides in the secreted. Functionally, hematopoietic growth factor capable of stimulating the proliferation of lymphoid progenitors. It is important for proliferation during certain stages of B-cell maturation. The polypeptide is Interleukin-7 (IL7) (Sus scrofa (Pig)).